The chain runs to 304 residues: Acetyl-coenzyme A carboxylase carboxyl transferase subunit beta (304 aa).

The region spanning 52 to 304 is the CoA carboxyltransferase N-terminal domain; the sequence is EVTKCPSCGV…TIFKVLNDII (253 aa). Positions 56, 59, 75, and 78 each coordinate Zn(2+). The segment at 56 to 78 adopts a C4-type zinc-finger fold; it reads CPSCGVLSHKSEIRANMKMCSNC.

The protein belongs to the AccD/PCCB family. Acetyl-CoA carboxylase is a heterohexamer composed of biotin carboxyl carrier protein (AccB), biotin carboxylase (AccC) and two subunits each of ACCase subunit alpha (AccA) and ACCase subunit beta (AccD). It depends on Zn(2+) as a cofactor.

It is found in the cytoplasm. It catalyses the reaction N(6)-carboxybiotinyl-L-lysyl-[protein] + acetyl-CoA = N(6)-biotinyl-L-lysyl-[protein] + malonyl-CoA. Its pathway is lipid metabolism; malonyl-CoA biosynthesis; malonyl-CoA from acetyl-CoA: step 1/1. Functionally, component of the acetyl coenzyme A carboxylase (ACC) complex. Biotin carboxylase (BC) catalyzes the carboxylation of biotin on its carrier protein (BCCP) and then the CO(2) group is transferred by the transcarboxylase to acetyl-CoA to form malonyl-CoA. The protein is Acetyl-coenzyme A carboxylase carboxyl transferase subunit beta of Fusobacterium nucleatum subsp. nucleatum (strain ATCC 25586 / DSM 15643 / BCRC 10681 / CIP 101130 / JCM 8532 / KCTC 2640 / LMG 13131 / VPI 4355).